A 340-amino-acid chain; its full sequence is MPVLEEKKTADHFHHIGVLGAGSWGTALAAVASYKGAVTLWGRKREIIDAINQRHINPDYLPDIIIPRTIHATDELNDLSSASALLVAIPAQKMRSVLRQIPNDSRPLILCAKGIEAESGLLMSQLAADIFPHRPIAVLSGPTFASEVARHLPTAVTLAAKEKDIRAALMQRLAIPTFRPYASSDVIGADVGGAVKNVLAIACGVVAGAKLGNNARAAVISRGFAEMNRFGIALGAKEETLTGLSGLGDLVLTCSSELSRNFTFGKKLGEGYSYEEQQKKRAVTTEGVFTAPVLQRVANKLKVEMPLVSAICDLIEGKSVNSVLERLLSRPLKGEYSISV.

The NADPH site is built by Ser-23, Trp-24, Arg-43, Lys-44, and Lys-113. Sn-glycerol 3-phosphate contacts are provided by Lys-113, Gly-141, and Thr-143. Position 145 (Ala-145) interacts with NADPH. Sn-glycerol 3-phosphate-binding residues include Lys-196, Asp-249, Ser-259, Arg-260, and Asn-261. Lys-196 acts as the Proton acceptor in catalysis. Arg-260 contacts NADPH. NADPH is bound at residue Glu-286.

This sequence belongs to the NAD-dependent glycerol-3-phosphate dehydrogenase family.

The protein localises to the cytoplasm. The catalysed reaction is sn-glycerol 3-phosphate + NAD(+) = dihydroxyacetone phosphate + NADH + H(+). The enzyme catalyses sn-glycerol 3-phosphate + NADP(+) = dihydroxyacetone phosphate + NADPH + H(+). The protein operates within membrane lipid metabolism; glycerophospholipid metabolism. Catalyzes the reduction of the glycolytic intermediate dihydroxyacetone phosphate (DHAP) to sn-glycerol 3-phosphate (G3P), the key precursor for phospholipid synthesis. The protein is Glycerol-3-phosphate dehydrogenase [NAD(P)+] of Zymomonas mobilis subsp. mobilis (strain ATCC 31821 / ZM4 / CP4).